The primary structure comprises 435 residues: Shikimate O-hydroxycinnamoyltransferase (435 aa).

Residues H153 and D382 each act as proton acceptor in the active site.

This sequence belongs to the plant acyltransferase family. As to expression, highly expressed in stem vascular tissues.

The catalysed reaction is shikimate + 4-coumaroyl-CoA = trans-4-coumaroylshikimate + CoA. Functionally, acyltransferase involved in the biosynthesis of lignin. The affinity for shikimate as acceptor is 100-fold higher than for quinate. The most efficient donors are caffeoyl-CoA &gt; p-coumaroyl-CoA &gt; feruloyl-CoA &gt;&gt; sinapoyl-CoA. This Nicotiana tabacum (Common tobacco) protein is Shikimate O-hydroxycinnamoyltransferase (HST).